Reading from the N-terminus, the 388-residue chain is Chalcone synthase LF3 (388 aa).

The active site involves cysteine 164.

It belongs to the thiolase-like superfamily. Chalcone/stilbene synthases family.

The catalysed reaction is (E)-4-coumaroyl-CoA + 3 malonyl-CoA + 3 H(+) = 2',4,4',6'-tetrahydroxychalcone + 3 CO2 + 4 CoA. The protein operates within secondary metabolite biosynthesis; flavonoid biosynthesis. The primary product of this enzyme is 4,2',4',6'-tetrahydroxychalcone (also termed naringenin-chalcone or chalcone) which can under specific conditions spontaneously isomerize into naringenin. This is Chalcone synthase LF3 (CHS-LF3) from Ipomoea batatas (Sweet potato).